We begin with the raw amino-acid sequence, 136 residues long: MLSLPRLQTVNDERSPALRALRRTPVMEARPLEVYATYACGERGELAGGLVGHVQWQWLHVDLLWVDAGARGAGLGSRLIARAEARAREEFGCIGSQVETWDFQAPGFYQRVGYRLAASIPDYPPGITSHLLVKEL.

The N-acetyltransferase domain maps to 1–136 (MLSLPRLQTV…ITSHLLVKEL (136 aa)).

In terms of biological role, confers resistance to blasticidin S antibiotic. In Streptomyces morookaense (Streptoverticillium morookaense), this protein is Blasticidin-S acetyltransferase (bls).